The following is a 116-amino-acid chain: Large ribosomal subunit protein bL17 (116 aa).

Belongs to the bacterial ribosomal protein bL17 family. In terms of assembly, part of the 50S ribosomal subunit. Contacts protein L32.

In Acaryochloris marina (strain MBIC 11017), this protein is Large ribosomal subunit protein bL17.